The sequence spans 342 residues: MNTSDFDFNLPEALIAQTPLKKRDSSKLLVVDHQKKTMKDTHFDHIIDELNSGDALVMNDTRVLPARLHGEKTVTHGHVELLLLKNIQGDQWEVLAKPAKRLKVGSHISFGDGRLKAIIKEELDHGGRIVEFSYEGIFLEVLESLGEMPLPPYIHEKLEDRDRYQTVYAKENGSAAAPTAGLHFTEELLSKIEAKGVKLVYLTLHVGLGTFRPVSVDNVEEHQMHSEFYSLSPEAAQTLKDVKANGGRIVAVGTTSIRTLETIGNKFAGQIEADSGWTNIFIKPGYQFKIVDAFSTNFHLPKSTLVMLVSAFAGRDFILDAYKHAVDKHYRFFSFGDAMFVK.

This sequence belongs to the QueA family. In terms of assembly, monomer.

Its subcellular location is the cytoplasm. The catalysed reaction is 7-aminomethyl-7-carbaguanosine(34) in tRNA + S-adenosyl-L-methionine = epoxyqueuosine(34) in tRNA + adenine + L-methionine + 2 H(+). It participates in tRNA modification; tRNA-queuosine biosynthesis. Its function is as follows. Transfers and isomerizes the ribose moiety from AdoMet to the 7-aminomethyl group of 7-deazaguanine (preQ1-tRNA) to give epoxyqueuosine (oQ-tRNA). This is S-adenosylmethionine:tRNA ribosyltransferase-isomerase from Streptococcus mutans serotype c (strain ATCC 700610 / UA159).